The sequence spans 418 residues: Metal tolerance protein 1 (418 aa).

Residues 1–56 (MDSHNSAPPQIAEVRMDISSSTSVAAGNKVCRGAACDFSDSSNSSKDARERMASMR) lie on the Cytoplasmic side of the membrane. The chain crosses the membrane as a helical span at residues 57-77 (KLIIAVILCIIFMAVEVVGGI). The Vacuolar portion of the chain corresponds to 78 to 89 (KANSLAILTDAA). The chain crosses the membrane as a helical span at residues 90–110 (HLLSDVAAFAISLFSLWAAGW). The Cytoplasmic segment spans residues 111–122 (EATPQQSYGFFR). Residues 123–143 (IEILGALVSIQLIWLLAGILV) form a helical membrane-spanning segment. At 144-160 (YEAIVRLINESGEVQGS) the chain is on the vacuolar side. A helical transmembrane segment spans residues 161–181 (LMFAVSAFGLFVNIIMAVLLG). The segment at 182-246 (HDHGHGHGHG…HHPGTGHHHH (65 aa)) is required for zinc-binding. At 182-282 (HDHGHGHGHG…RRNINVHSAY (101 aa)) the chain is on the cytoplasmic side. The interval 186-248 (HGHGHGHGHG…PGTGHHHHDA (63 aa)) is disordered. Positions 196–227 (HSHDHDHGGSDHDHHHHEDQEHGHVHHHEDGH) are enriched in basic and acidic residues. The segment covering 235–245 (LHHHPGTGHHH) has biased composition (basic residues). A helical transmembrane segment spans residues 283–303 (LHVLGDSIQSIGVMIGGAIIW). Over 304 to 307 (YKPE) the chain is Vacuolar. Residues 308–328 (WKIIDLICTLIFSVIVLFTTI) traverse the membrane as a helical segment. Residues 329–418 (KMLRNILEVL…SHVTIQIERE (90 aa)) are Cytoplasmic-facing.

The protein belongs to the cation diffusion facilitator (CDF) transporter (TC 2.A.4) family. SLC30A subfamily.

Its subcellular location is the vacuole membrane. Functionally, involved in sequestration of excess zinc in the cytoplasm into vacuoles to maintain zinc homeostasis. This is Metal tolerance protein 1 (MTP1) from Oryza sativa subsp. japonica (Rice).